The primary structure comprises 271 residues: Large ribosomal subunit protein uL2 (271 aa).

Residues 221–271 are disordered; it reads RGVAMNPVDHPMGGGEGKSSGGHPRNRNGIPSNGFKTRNKKKITNKYIIKK. The segment covering 257–271 has biased composition (basic residues); the sequence is TRNKKKITNKYIIKK.

This sequence belongs to the universal ribosomal protein uL2 family. In terms of assembly, part of the 50S ribosomal subunit. Forms a bridge to the 30S subunit in the 70S ribosome.

Its function is as follows. One of the primary rRNA binding proteins. Required for association of the 30S and 50S subunits to form the 70S ribosome, for tRNA binding and peptide bond formation. It has been suggested to have peptidyltransferase activity; this is somewhat controversial. Makes several contacts with the 16S rRNA in the 70S ribosome. The chain is Large ribosomal subunit protein uL2 from Karelsulcia muelleri (strain GWSS) (Sulcia muelleri).